Consider the following 245-residue polypeptide: tRNA1(Val) (adenine(37)-N6)-methyltransferase (245 aa).

Belongs to the methyltransferase superfamily. tRNA (adenine-N(6)-)-methyltransferase family.

The protein resides in the cytoplasm. It carries out the reaction adenosine(37) in tRNA1(Val) + S-adenosyl-L-methionine = N(6)-methyladenosine(37) in tRNA1(Val) + S-adenosyl-L-homocysteine + H(+). Its function is as follows. Specifically methylates the adenine in position 37 of tRNA(1)(Val) (anticodon cmo5UAC). In Escherichia fergusonii (strain ATCC 35469 / DSM 13698 / CCUG 18766 / IAM 14443 / JCM 21226 / LMG 7866 / NBRC 102419 / NCTC 12128 / CDC 0568-73), this protein is tRNA1(Val) (adenine(37)-N6)-methyltransferase.